The primary structure comprises 670 residues: C6 finger domain transcription factor iacK (670 aa).

Residues 1-84 form a disordered region; that stretch reads MNTSPDYAQP…GEPKQSGPTV (84 aa). Pro residues predominate over residues 44–54; sequence GPPPPPPPPPT. Positions 55-74 are enriched in low complexity; the sequence is ATATAATAAATTTTAAPSAT. The segment at residues 88 to 114 is a DNA-binding region (zn(2)-C6 fungal-type); the sequence is CLACRSKHLKCDGGNPCARCQASESIC. Residues 122 to 157 are disordered; sequence GYKGPRRNGTQNPNKRHAAASDDGSPNSNGSNESCP. A compositionally biased stretch (low complexity) spans 142–155; that stretch reads SDDGSPNSNGSNES.

The protein localises to the nucleus. Its function is as follows. Transcription factor; part of the gene cluster that mediates the biosynthesis of iso-A82775C, a enylepoxycyclohexane and biosynthetic precursor of the chloropestolide anticancer natural products. This is C6 finger domain transcription factor iacK from Pestalotiopsis fici (strain W106-1 / CGMCC3.15140).